Consider the following 468-residue polypeptide: Glutamate--tRNA ligase 2 (468 aa).

The 'HIGH' region signature appears at 11–21; it reads PSPTGFLHIGG. The 'KMSKS' region signature appears at 239 to 243; sequence KLSKR. Residue Lys-242 coordinates ATP.

The protein belongs to the class-I aminoacyl-tRNA synthetase family. Glutamate--tRNA ligase type 1 subfamily. As to quaternary structure, monomer.

It is found in the cytoplasm. The enzyme catalyses tRNA(Glu) + L-glutamate + ATP = L-glutamyl-tRNA(Glu) + AMP + diphosphate. Its function is as follows. Catalyzes the attachment of glutamate to tRNA(Glu) in a two-step reaction: glutamate is first activated by ATP to form Glu-AMP and then transferred to the acceptor end of tRNA(Glu). This is Glutamate--tRNA ligase 2 from Ruegeria pomeroyi (strain ATCC 700808 / DSM 15171 / DSS-3) (Silicibacter pomeroyi).